The following is a 173-amino-acid chain: Translation initiation factor IF-3 (173 aa).

It belongs to the IF-3 family. In terms of assembly, monomer.

The protein localises to the cytoplasm. IF-3 binds to the 30S ribosomal subunit and shifts the equilibrium between 70S ribosomes and their 50S and 30S subunits in favor of the free subunits, thus enhancing the availability of 30S subunits on which protein synthesis initiation begins. The chain is Translation initiation factor IF-3 from Parvibaculum lavamentivorans (strain DS-1 / DSM 13023 / NCIMB 13966).